The sequence spans 889 residues: Protein argonaute 15 (889 aa).

2 disordered regions span residues 1 to 26 (MESHGDEGEPSAMAKPPKKLPMSRKG) and 119 to 150 (EDASSSGRTTTRRSSGGDDGSPGGSDRKRMKR). The span at 122–132 (SSSGRTTTRRS) shows a compositional bias: low complexity. Residues 264–379 (PVIEFLLFNQ…IPLELCHLVP (116 aa)) enclose the PAZ domain. A Piwi domain is found at 546–853 (FVLCVLPERK…AAAQVSQFVR (308 aa)). Residues 857–878 (AASEGSGDGGAPPRPVPELPRL) form a disordered region.

This sequence belongs to the argonaute family. Ago subfamily.

Probably involved in the RNA silencing pathway. May bind to short RNAs such as microRNAs (miRNAs) or short interfering RNAs (siRNAs), and represses the translation of mRNAs which are complementary to them. The sequence is that of Protein argonaute 15 (AGO15) from Oryza sativa subsp. japonica (Rice).